Consider the following 353-residue polypeptide: Phospho-N-acetylmuramoyl-pentapeptide-transferase (353 aa).

The next 10 helical transmembrane spans lie at 22-42, 65-85, 88-108, 129-149, 161-181, 192-212, 228-248, 256-276, 281-301, and 330-350; these read FAFF…ITWA, TPTM…LFCI, DNIF…IGLI, LLAQ…SSEL, PLFD…ISSS, GLAT…LYLS, GLGE…GFLW, VFMG…LAII, ILLL…ILQV, and KIIV…LASI.

The protein belongs to the glycosyltransferase 4 family. MraY subfamily. Mg(2+) serves as cofactor.

The protein resides in the cell inner membrane. It catalyses the reaction UDP-N-acetyl-alpha-D-muramoyl-L-alanyl-gamma-D-glutamyl-meso-2,6-diaminopimeloyl-D-alanyl-D-alanine + di-trans,octa-cis-undecaprenyl phosphate = di-trans,octa-cis-undecaprenyl diphospho-N-acetyl-alpha-D-muramoyl-L-alanyl-D-glutamyl-meso-2,6-diaminopimeloyl-D-alanyl-D-alanine + UMP. The protein operates within cell wall biogenesis; peptidoglycan biosynthesis. In terms of biological role, catalyzes the initial step of the lipid cycle reactions in the biosynthesis of the cell wall peptidoglycan: transfers peptidoglycan precursor phospho-MurNAc-pentapeptide from UDP-MurNAc-pentapeptide onto the lipid carrier undecaprenyl phosphate, yielding undecaprenyl-pyrophosphoryl-MurNAc-pentapeptide, known as lipid I. In Campylobacter jejuni subsp. jejuni serotype O:6 (strain 81116 / NCTC 11828), this protein is Phospho-N-acetylmuramoyl-pentapeptide-transferase.